The chain runs to 121 residues: MARIAGVNIPNHKHTEIGLTAIYGVGRSRARKICEATGVPFDKKVKDLTDADLEKLRDEVGKVTVEGDLRRETTMNIKRLMDLGCYRGMRHRKGLPMRGQRTRTNARTRKGPRKAGVALKK.

A disordered region spans residues 91–121; the sequence is HRKGLPMRGQRTRTNARTRKGPRKAGVALKK.

It belongs to the universal ribosomal protein uS13 family. In terms of assembly, part of the 30S ribosomal subunit. Forms a loose heterodimer with protein S19. Forms two bridges to the 50S subunit in the 70S ribosome.

Functionally, located at the top of the head of the 30S subunit, it contacts several helices of the 16S rRNA. In the 70S ribosome it contacts the 23S rRNA (bridge B1a) and protein L5 of the 50S subunit (bridge B1b), connecting the 2 subunits; these bridges are implicated in subunit movement. Contacts the tRNAs in the A and P-sites. This Cupriavidus necator (strain ATCC 17699 / DSM 428 / KCTC 22496 / NCIMB 10442 / H16 / Stanier 337) (Ralstonia eutropha) protein is Small ribosomal subunit protein uS13.